We begin with the raw amino-acid sequence, 254 residues long: MRVLLSNDDGVHAAGLKALAEAFHGDEVWVVAPDREQSASSHAISLHRPLRLLEVAPRWYAVDGTPTDAVYMGLNLVLRDARPDVVVSGVNHGPNLGNDVLYSGTVAAAMEGALLGVNAIAVSLAAPPPHDFGEAARFAAALARQVVARPPPAPVLLNVNVPPGPVRGYRFARLGRRTYGNEVVEKTDPRGRKYYWIGGEGRVHNEDIPGSDCNTVLLERLAAVTPLHLDGTHDPMFQELRSWTVPGYEKEPAP.

The a divalent metal cation site is built by Asp8, Asp9, Ser38, and Asn91.

Belongs to the SurE nucleotidase family. A divalent metal cation is required as a cofactor.

The protein resides in the cytoplasm. The catalysed reaction is a ribonucleoside 5'-phosphate + H2O = a ribonucleoside + phosphate. Its function is as follows. Nucleotidase that shows phosphatase activity on nucleoside 5'-monophosphates. The polypeptide is 5'-nucleotidase SurE (Anaeromyxobacter dehalogenans (strain 2CP-1 / ATCC BAA-258)).